A 274-amino-acid chain; its full sequence is Large ribosomal subunit protein uL2 (274 aa).

Disordered stretches follow at residues 28-55 and 224-274; these read APHAPLLEKKSKSGGRNNNGRITTRHVG and VAMN…RRRK. Basic and acidic residues predominate over residues 263–274; sequence KRTDKMIVRRRK.

It belongs to the universal ribosomal protein uL2 family. In terms of assembly, part of the 50S ribosomal subunit. Forms a bridge to the 30S subunit in the 70S ribosome.

In terms of biological role, one of the primary rRNA binding proteins. Required for association of the 30S and 50S subunits to form the 70S ribosome, for tRNA binding and peptide bond formation. It has been suggested to have peptidyltransferase activity; this is somewhat controversial. Makes several contacts with the 16S rRNA in the 70S ribosome. The polypeptide is Large ribosomal subunit protein uL2 (Pseudomonas fluorescens (strain ATCC BAA-477 / NRRL B-23932 / Pf-5)).